We begin with the raw amino-acid sequence, 200 residues long: NADH-quinone oxidoreductase subunit C (200 aa).

The protein belongs to the complex I 30 kDa subunit family. As to quaternary structure, NDH-1 is composed of 14 different subunits. Subunits NuoB, C, D, E, F, and G constitute the peripheral sector of the complex.

It is found in the cell inner membrane. It carries out the reaction a quinone + NADH + 5 H(+)(in) = a quinol + NAD(+) + 4 H(+)(out). Functionally, NDH-1 shuttles electrons from NADH, via FMN and iron-sulfur (Fe-S) centers, to quinones in the respiratory chain. The immediate electron acceptor for the enzyme in this species is believed to be ubiquinone. Couples the redox reaction to proton translocation (for every two electrons transferred, four hydrogen ions are translocated across the cytoplasmic membrane), and thus conserves the redox energy in a proton gradient. The chain is NADH-quinone oxidoreductase subunit C from Ruegeria pomeroyi (strain ATCC 700808 / DSM 15171 / DSS-3) (Silicibacter pomeroyi).